A 322-amino-acid polypeptide reads, in one-letter code: tRNA U34 carboxymethyltransferase (322 aa).

Residues lysine 91, tryptophan 105, lysine 110, glycine 129, methionine 195, tyrosine 199, and arginine 314 each contribute to the carboxy-S-adenosyl-L-methionine site.

Belongs to the class I-like SAM-binding methyltransferase superfamily. CmoB family. In terms of assembly, homotetramer.

The enzyme catalyses carboxy-S-adenosyl-L-methionine + 5-hydroxyuridine(34) in tRNA = 5-carboxymethoxyuridine(34) in tRNA + S-adenosyl-L-homocysteine + H(+). Catalyzes carboxymethyl transfer from carboxy-S-adenosyl-L-methionine (Cx-SAM) to 5-hydroxyuridine (ho5U) to form 5-carboxymethoxyuridine (cmo5U) at position 34 in tRNAs. The polypeptide is tRNA U34 carboxymethyltransferase (Ectopseudomonas mendocina (strain ymp) (Pseudomonas mendocina)).